Consider the following 143-residue polypeptide: MFKLSGEDKANVKAVWDHVKGHEDAFGHEALGRMFTGIEQTHTYFPDKDLNEGSFALHSHGKKVMGALSNAVAHIDDLEATLVKLSDKHAHDLMVDPAEFPRLAEDILVVLGFHLPAKFTYAVQCSIDKFLHVTMRLCISKYR.

Residues 3–143 (KLSGEDKANV…TMRLCISKYR (141 aa)) form the Globin domain. H60 serves as a coordination point for O2. H89 is a binding site for heme b.

It belongs to the globin family. In terms of assembly, heterotetramer of two alpha chains and two beta chains. Red blood cells.

Its function is as follows. Involved in oxygen transport from the lung to the various peripheral tissues. The polypeptide is Hemoglobin subunit alpha (HBA) (Ambystoma mexicanum (Axolotl)).